Reading from the N-terminus, the 223-residue chain is MTEHPVVNGERRTVFGKKVKRLRRLGRTPGVIAGPVVPEPIPVAVDEREFERAFHHVGTARLVDLVVDGTTYPVFIREVALHPVTREILNVEFYAPDLARPVTVTVPVLTVGELAPDVVGVVTIQTPELEIRALPDAVPEHIEVDLSLLSTERTVIHAGEIPLPVGVELETDPDVVVVVVEEAEEAEAAEEATRVLAEEIGDRPRSAEEGAAPVKERKLRESE.

Residues 198 to 223 (EEIGDRPRSAEEGAAPVKERKLRESE) form a disordered region.

This sequence belongs to the bacterial ribosomal protein bL25 family. CTC subfamily. In terms of assembly, part of the 50S ribosomal subunit; part of the 5S rRNA/L5/L18/L25 subcomplex. Contacts the 5S rRNA. Binds to the 5S rRNA independently of L5 and L18.

Its function is as follows. This is one of the proteins that binds to the 5S RNA in the ribosome where it forms part of the central protuberance. This is Large ribosomal subunit protein bL25 from Thermomicrobium roseum (strain ATCC 27502 / DSM 5159 / P-2).